Reading from the N-terminus, the 585-residue chain is Arginine--tRNA ligase (585 aa).

A 'HIGH' region motif is present at residues 131-141 (ANPTGPMHVGH).

Belongs to the class-I aminoacyl-tRNA synthetase family. Monomer.

It localises to the cytoplasm. It catalyses the reaction tRNA(Arg) + L-arginine + ATP = L-arginyl-tRNA(Arg) + AMP + diphosphate. The protein is Arginine--tRNA ligase of Chelativorans sp. (strain BNC1).